A 202-amino-acid polypeptide reads, in one-letter code: Small ribosomal subunit protein uS4c (202 aa).

In terms of domain architecture, S4 RNA-binding spans 90 to 150; the sequence is MRLDNVIFRL…NQRKSQAIIN (61 aa).

Belongs to the universal ribosomal protein uS4 family. In terms of assembly, part of the 30S ribosomal subunit. Contacts protein S5. The interaction surface between S4 and S5 is involved in control of translational fidelity.

It localises to the plastid. Its subcellular location is the chloroplast. Functionally, one of the primary rRNA binding proteins, it binds directly to 16S rRNA where it nucleates assembly of the body of the 30S subunit. Its function is as follows. With S5 and S12 plays an important role in translational accuracy. This chain is Small ribosomal subunit protein uS4c (rps4), found in Canalohypopterygium tamariscinum (Moss).